The primary structure comprises 85 residues: Small ribosomal subunit protein uS17 (85 aa).

The protein belongs to the universal ribosomal protein uS17 family. As to quaternary structure, part of the 30S ribosomal subunit.

Functionally, one of the primary rRNA binding proteins, it binds specifically to the 5'-end of 16S ribosomal RNA. In Pseudoalteromonas translucida (strain TAC 125), this protein is Small ribosomal subunit protein uS17.